A 334-amino-acid polypeptide reads, in one-letter code: Glycerol-3-phosphate dehydrogenase [NAD(P)+] (334 aa).

Residues Tyr14 and Lys108 each contribute to the NADPH site. Sn-glycerol 3-phosphate is bound by residues Lys108, Gly140, and Ser142. Ala144 provides a ligand contact to NADPH. Lys195, Asp248, Ser258, Arg259, and Asn260 together coordinate sn-glycerol 3-phosphate. Catalysis depends on Lys195, which acts as the Proton acceptor. Arg259 serves as a coordination point for NADPH. Glu285 lines the NADPH pocket.

It belongs to the NAD-dependent glycerol-3-phosphate dehydrogenase family.

It is found in the cytoplasm. The catalysed reaction is sn-glycerol 3-phosphate + NAD(+) = dihydroxyacetone phosphate + NADH + H(+). The enzyme catalyses sn-glycerol 3-phosphate + NADP(+) = dihydroxyacetone phosphate + NADPH + H(+). It participates in membrane lipid metabolism; glycerophospholipid metabolism. Functionally, catalyzes the reduction of the glycolytic intermediate dihydroxyacetone phosphate (DHAP) to sn-glycerol 3-phosphate (G3P), the key precursor for phospholipid synthesis. The sequence is that of Glycerol-3-phosphate dehydrogenase [NAD(P)+] from Mesoplasma florum (strain ATCC 33453 / NBRC 100688 / NCTC 11704 / L1) (Acholeplasma florum).